Here is a 275-residue protein sequence, read N- to C-terminus: Ribosomal RNA small subunit methyltransferase A (275 aa).

S-adenosyl-L-methionine contacts are provided by Asn-19, Leu-21, Gly-46, Glu-71, Asp-94, and Asn-117.

This sequence belongs to the class I-like SAM-binding methyltransferase superfamily. rRNA adenine N(6)-methyltransferase family. RsmA subfamily.

The protein resides in the cytoplasm. It carries out the reaction adenosine(1518)/adenosine(1519) in 16S rRNA + 4 S-adenosyl-L-methionine = N(6)-dimethyladenosine(1518)/N(6)-dimethyladenosine(1519) in 16S rRNA + 4 S-adenosyl-L-homocysteine + 4 H(+). Its function is as follows. Specifically dimethylates two adjacent adenosines (A1518 and A1519) in the loop of a conserved hairpin near the 3'-end of 16S rRNA in the 30S particle. May play a critical role in biogenesis of 30S subunits. The protein is Ribosomal RNA small subunit methyltransferase A of Burkholderia orbicola (strain MC0-3).